The chain runs to 646 residues: UvrABC system protein B (646 aa).

The Helicase ATP-binding domain occupies 29–411 (LEKNPEKSKQ…SNQVVEQIIR (383 aa)). An ATP-binding site is contributed by 42-49 (GVTGSGKT). Residues 95–118 (YYDYYQPESYIPQKDQYIEKDAQI) carry the Beta-hairpin motif. The 163-residue stretch at 428-590 (QVEDIIKETE…ITPQTIVKPI (163 aa)) folds into the Helicase C-terminal domain. A UVR domain is found at 609–644 (PNVIVELEAEMYEAAEALEFEKAIKIRDTIAKLKKK).

It belongs to the UvrB family. Forms a heterotetramer with UvrA during the search for lesions. Interacts with UvrC in an incision complex.

The protein resides in the cytoplasm. Its function is as follows. The UvrABC repair system catalyzes the recognition and processing of DNA lesions. A damage recognition complex composed of 2 UvrA and 2 UvrB subunits scans DNA for abnormalities. Upon binding of the UvrA(2)B(2) complex to a putative damaged site, the DNA wraps around one UvrB monomer. DNA wrap is dependent on ATP binding by UvrB and probably causes local melting of the DNA helix, facilitating insertion of UvrB beta-hairpin between the DNA strands. Then UvrB probes one DNA strand for the presence of a lesion. If a lesion is found the UvrA subunits dissociate and the UvrB-DNA preincision complex is formed. This complex is subsequently bound by UvrC and the second UvrB is released. If no lesion is found, the DNA wraps around the other UvrB subunit that will check the other stand for damage. This chain is UvrABC system protein B, found in Methanococcus maripaludis (strain DSM 14266 / JCM 13030 / NBRC 101832 / S2 / LL).